The sequence spans 570 residues: Proline--tRNA ligase (570 aa).

Belongs to the class-II aminoacyl-tRNA synthetase family. ProS type 1 subfamily. As to quaternary structure, homodimer.

The protein resides in the cytoplasm. The enzyme catalyses tRNA(Pro) + L-proline + ATP = L-prolyl-tRNA(Pro) + AMP + diphosphate. Catalyzes the attachment of proline to tRNA(Pro) in a two-step reaction: proline is first activated by ATP to form Pro-AMP and then transferred to the acceptor end of tRNA(Pro). As ProRS can inadvertently accommodate and process non-cognate amino acids such as alanine and cysteine, to avoid such errors it has two additional distinct editing activities against alanine. One activity is designated as 'pretransfer' editing and involves the tRNA(Pro)-independent hydrolysis of activated Ala-AMP. The other activity is designated 'posttransfer' editing and involves deacylation of mischarged Ala-tRNA(Pro). The misacylated Cys-tRNA(Pro) is not edited by ProRS. The chain is Proline--tRNA ligase from Shewanella oneidensis (strain ATCC 700550 / JCM 31522 / CIP 106686 / LMG 19005 / NCIMB 14063 / MR-1).